We begin with the raw amino-acid sequence, 168 residues long: Cyclic pyranopterin monophosphate synthase (168 aa).

Substrate-binding positions include 83–85 and 121–122; these read LCH and ME. Asp-136 is an active-site residue.

The protein belongs to the MoaC family. Homohexamer; trimer of dimers.

The catalysed reaction is (8S)-3',8-cyclo-7,8-dihydroguanosine 5'-triphosphate = cyclic pyranopterin phosphate + diphosphate. The protein operates within cofactor biosynthesis; molybdopterin biosynthesis. Functionally, catalyzes the conversion of (8S)-3',8-cyclo-7,8-dihydroguanosine 5'-triphosphate to cyclic pyranopterin monophosphate (cPMP). This Nostoc sp. (strain PCC 7120 / SAG 25.82 / UTEX 2576) protein is Cyclic pyranopterin monophosphate synthase.